An 862-amino-acid polypeptide reads, in one-letter code: Linoleate 9S-lipoxygenase 1 (862 aa).

The PLAT domain occupies 34–161 (NDFGATIIDG…NYRYSRVFFA (128 aa)). Residues 164 to 862 (TYLPSQMPAA…AKGIPNSISI (699 aa)) form the Lipoxygenase domain. Residues 212–241 (GRPILGGNSDHPYPRRGRTERKPNASDPSL) are disordered. Fe cation contacts are provided by His-517, His-522, His-708, Asn-712, and Ile-862.

The protein belongs to the lipoxygenase family. As to quaternary structure, monomer. The cofactor is Fe cation.

The catalysed reaction is (9Z,12Z)-octadecadienoate + O2 = (9S)-hydroperoxy-(10E,12Z)-octadecadienoate. Its pathway is lipid metabolism; oxylipin biosynthesis. Its function is as follows. Plant lipoxygenase may be involved in a number of diverse aspects of plant physiology including growth and development, pest resistance, and senescence or responses to wounding. It catalyzes the hydroperoxidation of lipids containing a cis,cis-1,4-pentadiene structure. In Hordeum vulgare (Barley), this protein is Linoleate 9S-lipoxygenase 1 (LOX1.1).